We begin with the raw amino-acid sequence, 983 residues long: UPF0182 protein CMM_1204 (983 aa).

Transmembrane regions (helical) follow at residues 16–36, 56–76, 108–128, 161–181, 205–225, 255–275, and 281–301; these read LAIT…FAGF, WGAG…PVFV, LAMF…ASSG, FYHA…LGVL, IQIA…IWLD, AILA…AVIG, and IIGT…YPAI. Residues 699–714 are compositionally biased toward polar residues; sequence QDLWTTPNDPTATTEA. Disordered stretches follow at residues 699–718 and 884–936; these read QDLW…GTPA and DSGA…AQDV. Positions 902–918 are enriched in gly residues; the sequence is GGTGDGATDGATDGGTG. Residues 919-933 show a composition bias toward low complexity; sequence STPTPAPTTSPSAPA.

This sequence belongs to the UPF0182 family.

Its subcellular location is the cell membrane. In Clavibacter michiganensis subsp. michiganensis (strain NCPPB 382), this protein is UPF0182 protein CMM_1204.